A 158-amino-acid chain; its full sequence is 2-C-methyl-D-erythritol 2,4-cyclodiphosphate synthase (158 aa).

Positions 8 and 10 each coordinate a divalent metal cation. 4-CDP-2-C-methyl-D-erythritol 2-phosphate-binding positions include 8–10 (DSH) and 34–35 (HS). His42 is a binding site for a divalent metal cation. 4-CDP-2-C-methyl-D-erythritol 2-phosphate-binding positions include 56–58 (DIG), 61–65 (FPDND), and Arg142.

Belongs to the IspF family. In terms of assembly, homotrimer. A divalent metal cation serves as cofactor.

It catalyses the reaction 4-CDP-2-C-methyl-D-erythritol 2-phosphate = 2-C-methyl-D-erythritol 2,4-cyclic diphosphate + CMP. It functions in the pathway isoprenoid biosynthesis; isopentenyl diphosphate biosynthesis via DXP pathway; isopentenyl diphosphate from 1-deoxy-D-xylulose 5-phosphate: step 4/6. In terms of biological role, involved in the biosynthesis of isopentenyl diphosphate (IPP) and dimethylallyl diphosphate (DMAPP), two major building blocks of isoprenoid compounds. Catalyzes the conversion of 4-diphosphocytidyl-2-C-methyl-D-erythritol 2-phosphate (CDP-ME2P) to 2-C-methyl-D-erythritol 2,4-cyclodiphosphate (ME-CPP) with a corresponding release of cytidine 5-monophosphate (CMP). The protein is 2-C-methyl-D-erythritol 2,4-cyclodiphosphate synthase of Brachyspira hyodysenteriae (strain ATCC 49526 / WA1).